Here is a 393-residue protein sequence, read N- to C-terminus: Phosphoglycerate kinase (393 aa).

Substrate-binding positions include 21–23 (DLN), arginine 36, 59–62 (HLGR), arginine 114, and arginine 147. ATP-binding positions include lysine 198, glutamate 314, and 340–343 (GGDT).

This sequence belongs to the phosphoglycerate kinase family. In terms of assembly, monomer.

The protein localises to the cytoplasm. The catalysed reaction is (2R)-3-phosphoglycerate + ATP = (2R)-3-phospho-glyceroyl phosphate + ADP. It participates in carbohydrate degradation; glycolysis; pyruvate from D-glyceraldehyde 3-phosphate: step 2/5. This Buchnera aphidicola subsp. Baizongia pistaciae (strain Bp) protein is Phosphoglycerate kinase.